The following is a 159-amino-acid chain: Protein-export protein SecB (159 aa).

The protein belongs to the SecB family. As to quaternary structure, homotetramer, a dimer of dimers. One homotetramer interacts with 1 SecA dimer.

Its subcellular location is the cytoplasm. In terms of biological role, one of the proteins required for the normal export of preproteins out of the cell cytoplasm. It is a molecular chaperone that binds to a subset of precursor proteins, maintaining them in a translocation-competent state. It also specifically binds to its receptor SecA. The polypeptide is Protein-export protein SecB (Pseudomonas fluorescens (strain ATCC BAA-477 / NRRL B-23932 / Pf-5)).